The following is a 1409-amino-acid chain: MSADIVKQLKGTRSDVKAAATTIELKFKEFSKGIGINDASFPLRYELSVLRQLCLALKDNLHQHADLYCGIAATMLPHVEPYEEKPSLWEAHLTSLRYIHHGLCQEKSLTECQKMYGLIRSQPCRLQEEADYKFYLDIHLTHFNGIYLQMQKETLPLAATDELYYALEAMGVLFDTMHQRKVAKNAALLVQLNDSLFSKRSKAFLKYLSALPPESTTKMYDPLLKLLSCSWATPSSELTNQFTEYLGLVLALVQIDMFSIEAPLEQQLALKLLRICRDLYKDVSPQNYSIQLLYYYVKLMYVREATADFKQTYIDLCKKFVYFFEHKGATHAKEQWFMDLLVFFQRLQTLLHQSSNKPPLDIFWQQLEGDDSSEVYTAHFQLLHGCLGLAVNVVRSPLGTSCSNEACKSIRRHCLLYFGMCALEAYINWQPTTEQKADKAPYKPLLGILGYTLDVAKSMKCLGPSAMELVKLVRLLALVAEKVSCPEQMSLVLAFLEPLQHLRPLIASQDMLSVLRRIYKASVHCKSSDMANRLQSTYLAALTNPSRLRSQLFAHYHNANNTEKCVYEWHESSPMPNPLTPAQTKQLYDVDLLAVLHFLSAPPVPLLQSLLRCRHNDYHLALLARKMRTDSEVVRQCEELRSQLHSTALKQPLSRMQQLAIGHTSISVLLEALEAQKTKFSIKETAENCLEELIVKNNLLELNIKREHRLVELATSAIAGFAAFFERADTEPLGCDDTPIDWEALIDDAVAAAMALSTMGYMAQADEAWLLILRIGQMLDERFTYLRALTHFLGQDHLNSNQQLQLSEEVDRAQELLDDLWPQLQNGWFFKRQHTIVMLCLCHMASYYARQDCLCHAQLLLLQAEELRAQFDERVGKSDIVQITIQTVRFRLEYLRNKRCSSLPRRPTPLRQLDTLVDSVRNYCTVSSVDLGALQLLLADLVRESTECAANRLTERFAFYGTMLNLVLQSGMALRTIEVLISWLWMNLQMEYLDQAQSKLRLLDHLLAIKPLSRTLVEQTSATYVPAIAAKEDLKANAMSELTSNMLLMQLVEPIRKQNQMDVATIKSLPMHEPIPTSHQLQRYVSKQGTPPHLRDSMQLQCIYFIVGCLHARFSFLKRENDQLDDFYVGAGNWLQEDPVRTATLGSMLLVHELYHLNYLRFRKKHKEALSYAEAGLKSVYQTADINYSFNFMVQLKTARLELHPVGKARAKTIRRALAFNTSPEDKRRKGVVEGSIKAKSSARKTPRFKIYTELELRPPIGCSNSSSSSSKSGNENTPPSDHVDLNACQAIEISDDDAASVSASTPAPSQLKRSQSVPAKATKTRSARVGSQLKVPEIIELDDTMEETPSTSTAATVKRYPTTDARSSRARNRQLEETPATTRGRPRRKVPEPAPQQETVSLRPRQRN.

Residues 1052 to 1058 (VEPIRKQ) form a separase cleavage-site region. Disordered stretches follow at residues 1260–1284 (PIGC…SDHV) and 1297–1409 (DDAA…RQRN). Low complexity-rich tracts occupy residues 1264–1273 (SNSSSSSSKS) and 1300–1310 (ASVSASTPAPS).

As to quaternary structure, interacts with pim and Sse. Cleavage of thr contributes to inactivation of Sse.

The protein resides in the cytoplasm. In terms of biological role, required specifically for chromosome disjunction during all mitoses; maternally provided protein is sufficient until mitosis 14 then zygotic protein is required. Involved in formation and/or maintenance of epithelial structures: bud extension during Malpighian tubule development, and foregut and hindgut morphogenesis. The sequence is that of Protein three rows (thr) from Drosophila pseudoobscura pseudoobscura (Fruit fly).